We begin with the raw amino-acid sequence, 251 residues long: Small ribosomal subunit protein uS2 (251 aa).

This sequence belongs to the universal ribosomal protein uS2 family.

This is Small ribosomal subunit protein uS2 from Nitrosomonas eutropha (strain DSM 101675 / C91 / Nm57).